Consider the following 317-residue polypeptide: SURF1-like protein (317 aa).

Helical transmembrane passes span 78–98 and 293–313; these read GSIL…WQIY and HMNY…MWIH.

The protein belongs to the SURF1 family.

Its subcellular location is the mitochondrion inner membrane. Probably involved in the biogenesis of the COX complex. This chain is SURF1-like protein (sft-1), found in Caenorhabditis briggsae.